A 109-amino-acid chain; its full sequence is Iron-sulfur cluster assembly protein CyaY (109 aa).

Belongs to the frataxin family.

Its function is as follows. Involved in iron-sulfur (Fe-S) cluster assembly. May act as a regulator of Fe-S biogenesis. The chain is Iron-sulfur cluster assembly protein CyaY from Bordetella avium (strain 197N).